Reading from the N-terminus, the 257-residue chain is tRNA (guanine-N(1)-)-methyltransferase (257 aa).

Residues G117 and 137-142 each bind S-adenosyl-L-methionine; that span reads LGDFVL.

The protein belongs to the RNA methyltransferase TrmD family. Homodimer.

Its subcellular location is the cytoplasm. The catalysed reaction is guanosine(37) in tRNA + S-adenosyl-L-methionine = N(1)-methylguanosine(37) in tRNA + S-adenosyl-L-homocysteine + H(+). Specifically methylates guanosine-37 in various tRNAs. This is tRNA (guanine-N(1)-)-methyltransferase from Bordetella parapertussis (strain 12822 / ATCC BAA-587 / NCTC 13253).